Consider the following 429-residue polypeptide: Citrate synthase, chromosomal (429 aa).

Residues histidine 306 and aspartate 364 contribute to the active site.

The protein belongs to the citrate synthase family.

It catalyses the reaction oxaloacetate + acetyl-CoA + H2O = citrate + CoA + H(+). It functions in the pathway carbohydrate metabolism; tricarboxylic acid cycle; isocitrate from oxaloacetate: step 1/2. The protein is Citrate synthase, chromosomal (ccsA) of Rhizobium tropici.